The primary structure comprises 101 residues: Small ribosomal subunit protein uS14 (101 aa).

It belongs to the universal ribosomal protein uS14 family. As to quaternary structure, part of the 30S ribosomal subunit. Contacts proteins S3 and S10.

Functionally, binds 16S rRNA, required for the assembly of 30S particles and may also be responsible for determining the conformation of the 16S rRNA at the A site. The sequence is that of Small ribosomal subunit protein uS14 from Cronobacter sakazakii (strain ATCC BAA-894) (Enterobacter sakazakii).